The chain runs to 243 residues: Pyridoxine 5'-phosphate synthase (243 aa).

Asn9 contributes to the 3-amino-2-oxopropyl phosphate binding site. 11–12 (DH) serves as a coordination point for 1-deoxy-D-xylulose 5-phosphate. Residue Arg20 participates in 3-amino-2-oxopropyl phosphate binding. His45 serves as the catalytic Proton acceptor. 1-deoxy-D-xylulose 5-phosphate contacts are provided by Arg47 and His52. Catalysis depends on Glu72, which acts as the Proton acceptor. Thr102 contributes to the 1-deoxy-D-xylulose 5-phosphate binding site. His193 functions as the Proton donor in the catalytic mechanism. Residues Gly194 and 215–216 (GH) each bind 3-amino-2-oxopropyl phosphate.

This sequence belongs to the PNP synthase family. Homooctamer; tetramer of dimers.

The protein resides in the cytoplasm. It catalyses the reaction 3-amino-2-oxopropyl phosphate + 1-deoxy-D-xylulose 5-phosphate = pyridoxine 5'-phosphate + phosphate + 2 H2O + H(+). It functions in the pathway cofactor biosynthesis; pyridoxine 5'-phosphate biosynthesis; pyridoxine 5'-phosphate from D-erythrose 4-phosphate: step 5/5. In terms of biological role, catalyzes the complicated ring closure reaction between the two acyclic compounds 1-deoxy-D-xylulose-5-phosphate (DXP) and 3-amino-2-oxopropyl phosphate (1-amino-acetone-3-phosphate or AAP) to form pyridoxine 5'-phosphate (PNP) and inorganic phosphate. This is Pyridoxine 5'-phosphate synthase from Photobacterium profundum (strain SS9).